The chain runs to 214 residues: Galactokinase (214 aa).

Alpha-D-galactose-binding residues include R47, D53, H54, and D56. 4 residues coordinate ATP: G149, G151, S153, and S154. D199 provides a ligand contact to alpha-D-galactose. The active-site Proton acceptor is the D199.

The protein belongs to the GHMP kinase family. GalK subfamily.

The enzyme catalyses alpha-D-galactose + ATP = alpha-D-galactose 1-phosphate + ADP + H(+). The protein operates within carbohydrate metabolism; galactose metabolism. Functionally, galactokinase is a key enzyme in the galactose metabolism where it catalyzes the conversion of alpha-D-galactose to galactose 1-phosphate. Can also induce the transcription of the gal genes in response to the organism being challenged with galactose as the sole source of carbon. The protein is Galactokinase of Candida maltosa (Yeast).